The sequence spans 280 residues: Fructose-1,6-bisphosphatase/inositol-1-monophosphatase (280 aa).

Residues Glu73, Asp94, Leu96, and Asp97 each coordinate Mg(2+). Residues 97–99 (DGT), Arg195, Val200, and Arg219 contribute to the substrate site. Residue Asp226 coordinates Mg(2+).

The protein belongs to the inositol monophosphatase superfamily. FBPase class 4 family. The cofactor is Mg(2+).

The catalysed reaction is beta-D-fructose 1,6-bisphosphate + H2O = beta-D-fructose 6-phosphate + phosphate. It carries out the reaction a myo-inositol phosphate + H2O = myo-inositol + phosphate. Phosphatase with broad specificity; it can dephosphorylate fructose 1,6-bisphosphate, and both D and L isomers of inositol-1-phosphate (I-1-P). In Methanothermobacter thermautotrophicus (strain ATCC 29096 / DSM 1053 / JCM 10044 / NBRC 100330 / Delta H) (Methanobacterium thermoautotrophicum), this protein is Fructose-1,6-bisphosphatase/inositol-1-monophosphatase (suhB).